The primary structure comprises 450 residues: Phosphoglucosamine mutase (450 aa).

S102 serves as the catalytic Phosphoserine intermediate. 4 residues coordinate Mg(2+): S102, D244, D246, and D248. S102 is subject to Phosphoserine.

This sequence belongs to the phosphohexose mutase family. Mg(2+) serves as cofactor. Post-translationally, activated by phosphorylation.

It catalyses the reaction alpha-D-glucosamine 1-phosphate = D-glucosamine 6-phosphate. In terms of biological role, catalyzes the conversion of glucosamine-6-phosphate to glucosamine-1-phosphate. The polypeptide is Phosphoglucosamine mutase (Bartonella bacilliformis (strain ATCC 35685 / KC583 / Herrer 020/F12,63)).